A 544-amino-acid polypeptide reads, in one-letter code: Chaperonin GroEL (544 aa).

ATP contacts are provided by residues 30–33 (TLGP), lysine 51, 87–91 (DGTTT), glycine 415, 479–481 (NAA), and aspartate 495.

The protein belongs to the chaperonin (HSP60) family. As to quaternary structure, forms a cylinder of 14 subunits composed of two heptameric rings stacked back-to-back. Interacts with the co-chaperonin GroES.

The protein localises to the cytoplasm. It carries out the reaction ATP + H2O + a folded polypeptide = ADP + phosphate + an unfolded polypeptide.. Together with its co-chaperonin GroES, plays an essential role in assisting protein folding. The GroEL-GroES system forms a nano-cage that allows encapsulation of the non-native substrate proteins and provides a physical environment optimized to promote and accelerate protein folding. This is Chaperonin GroEL from Acinetobacter baylyi (strain ATCC 33305 / BD413 / ADP1).